A 954-amino-acid polypeptide reads, in one-letter code: Chromosomal passenger complex protein BIR1 (954 aa).

BIR repeat units follow at residues Arg-20 to Tyr-117 and Arg-153 to Gln-241. The Zn(2+) site is built by Cys-208, Cys-211, His-228, and Cys-237. Residues Asn-375 to Lys-419 are disordered. Basic residues predominate over residues Ile-385–Pro-396. Ser-477, Ser-508, and Ser-552 each carry phosphoserine. Disordered stretches follow at residues Asp-541–Val-645 and Phe-661–Pro-685. Residues Pro-556–Thr-583 show a composition bias toward basic and acidic residues. At Ser-587 the chain carries Phosphoserine. Positions Ser-593–Thr-604 are enriched in polar residues. 2 positions are modified to phosphoserine: Ser-751 and Ser-765. Residues Leu-798–Lys-839 form a disordered region. A compositionally biased stretch (basic and acidic residues) spans Ser-809 to Thr-818. Residues Ser-819–Gly-835 are compositionally biased toward polar residues.

Component of the CPC complex at least composed of IPL1, BIR1 and SLI15. Interacts with CBF2/NDC10. Interacts with CBF3D/SKP1.

In terms of biological role, component of the chromosomal passenger complex (CPC), a complex that acts as a key regulator of chromosome segregation and cytokinesis. The chain is Chromosomal passenger complex protein BIR1 (BIR1) from Saccharomyces cerevisiae (strain ATCC 204508 / S288c) (Baker's yeast).